The primary structure comprises 839 residues: MANILRKVIENDKGELRKLEKIAKKVESYADQMASLSDRDLQGKTLEFKERYQKGETLEQLLPEAFAVVREAAKRVLGLFPYRVQIMGGIVLHNGDVPEMRTGEGKTLTATMPVYLNAIAGEGVHVITVNEYLSTRDATEMGEVYSWLGLSVGINLAAKSPAEKREAYNCDITYSTNSEVGFDYLRDNMVVRQEDMVQRPLNFALVDEVDSVLIDEARTPLIVSGAVSSETNQLYIRADMFVKTLTSVDYVIDVPTKTIGLSDSGIDKAESYFNLSNLYDIENVALTHFIDNALRANYIMLLDIDYVVSEDGEILIVDQFTGRTMEGRRFSDGLHQAIEAKEGVRIQEESKTSASITYQNMFRMYKKLAGMTGTAKTEEEEFREVYNMRIIPIPTNRPIARIDHTDLLYPTLESKFRAVVEDVKTRHAKGQPILVGTVAVETSDLISRKLVEAGIPHEVLNAKNHFKEAQIIMNAGQRGAVTIATNMAGRGTDIKLGEGVRELGGLCVIGTERHESRRIDNQLRGRSGRQGDPGESQFYLSLEDDLMRRFGSDRIKAFLDRMKLDEEDTVIKSGMLGRQVESAQKRVEGNNYDTRKQVLQYDDVMREQREIIYANRRDVITANRDLGPEIKAMIKRTIDRAVDAHARSNRKDAVDAIVTFARTSLVPEESISAKELRGLKDEQIKEKLYQRALAIYDQQLSKLRDQEAIIEFQKVLILMIVDNKWTEHIDALDQLRNAVGLRGYAQNNPVVEYQAEGFKMFQDMIGAIEFDVTRTMMKAQIHEQERERASQRATTAAPQNIQSQQSANTDDLPKVERNEACPCGSGKKFKNCHGRKSFS.

Residues Gln-85, 103-107 (GEGKT), and Asp-493 contribute to the ATP site. Residues 780–790 (QIHEQERERAS) are compositionally biased toward basic and acidic residues. Residues 780–839 (QIHEQERERASQRATTAAPQNIQSQQSANTDDLPKVERNEACPCGSGKKFKNCHGRKSFS) are disordered. Residues 791–809 (QRATTAAPQNIQSQQSANT) are compositionally biased toward polar residues. Residues Cys-821, Cys-823, Cys-832, and His-833 each contribute to the Zn(2+) site. Residues 827 to 839 (KKFKNCHGRKSFS) are compositionally biased toward basic residues.

It belongs to the SecA family. As to quaternary structure, monomer and homodimer. Part of the essential Sec protein translocation apparatus which comprises SecA, SecYEG and auxiliary proteins SecDF. Other proteins may also be involved. It depends on Zn(2+) as a cofactor.

Its subcellular location is the cell membrane. The protein localises to the cytoplasm. The catalysed reaction is ATP + H2O + cellular proteinSide 1 = ADP + phosphate + cellular proteinSide 2.. Functionally, part of the Sec protein translocase complex. Interacts with the SecYEG preprotein conducting channel. Has a central role in coupling the hydrolysis of ATP to the transfer of proteins into and across the cell membrane, serving as an ATP-driven molecular motor driving the stepwise translocation of polypeptide chains across the membrane. The protein is Protein translocase subunit SecA of Streptococcus pyogenes serotype M3 (strain ATCC BAA-595 / MGAS315).